The sequence spans 291 residues: B3 domain-containing protein At2g16210 (291 aa).

Positions 19–114 (FFKVVQSINV…HFTVNIFKLD (96 aa)) form a DNA-binding region, TF-B3 1. Residues 149-159 (VSSNRGQTTAA) show a composition bias toward polar residues. The tract at residues 149 to 182 (VSSNRGQTTAAESKGRKLNLGKRAAKESQSSKRT) is disordered. Positions 172–182 (AAKESQSSKRT) are enriched in basic and acidic residues. Positions 200 to 291 (AAAFTILFKQ…KELLLVVSKP (92 aa)) form a DNA-binding region, TF-B3 2.

The protein resides in the nucleus. The protein is B3 domain-containing protein At2g16210 of Arabidopsis thaliana (Mouse-ear cress).